We begin with the raw amino-acid sequence, 151 residues long: Putative truncated GMC-type inactive oxidoreductase L893 (151 aa).

Belongs to the GMC oxidoreductase family.

Its subcellular location is the virion. The sequence is that of Putative truncated GMC-type inactive oxidoreductase L893 from Acanthamoeba polyphaga (Amoeba).